Consider the following 212-residue polypeptide: 3,4-dihydroxy-2-butanone 4-phosphate synthase (212 aa).

Residues 37–38 (RE), Asp42, 150–154 (RRGHT), and Glu174 contribute to the D-ribulose 5-phosphate site. Residue Glu38 participates in Mg(2+) binding. Mg(2+) is bound at residue His153.

This sequence belongs to the DHBP synthase family. Homodimer. Mg(2+) is required as a cofactor. Requires Mn(2+) as cofactor.

The catalysed reaction is D-ribulose 5-phosphate = (2S)-2-hydroxy-3-oxobutyl phosphate + formate + H(+). Its pathway is cofactor biosynthesis; riboflavin biosynthesis; 2-hydroxy-3-oxobutyl phosphate from D-ribulose 5-phosphate: step 1/1. In terms of biological role, catalyzes the conversion of D-ribulose 5-phosphate to formate and 3,4-dihydroxy-2-butanone 4-phosphate. This chain is 3,4-dihydroxy-2-butanone 4-phosphate synthase, found in Histophilus somni (strain 129Pt) (Haemophilus somnus).